The chain runs to 87 residues: Small ribosomal subunit protein bS16 (87 aa).

This sequence belongs to the bacterial ribosomal protein bS16 family.

The chain is Small ribosomal subunit protein bS16 from Buchnera aphidicola subsp. Baizongia pistaciae (strain Bp).